The primary structure comprises 156 residues: Small ribosomal subunit protein uS7 (156 aa).

The protein belongs to the universal ribosomal protein uS7 family. As to quaternary structure, part of the 30S ribosomal subunit. Contacts proteins S9 and S11.

In terms of biological role, one of the primary rRNA binding proteins, it binds directly to 16S rRNA where it nucleates assembly of the head domain of the 30S subunit. Is located at the subunit interface close to the decoding center, probably blocks exit of the E-site tRNA. The chain is Small ribosomal subunit protein uS7 from Renibacterium salmoninarum (strain ATCC 33209 / DSM 20767 / JCM 11484 / NBRC 15589 / NCIMB 2235).